The chain runs to 320 residues: N-acetylneuraminate lyase (320 aa).

The aceneuramate site is built by threonine 51 and threonine 52. Residue tyrosine 143 is the Proton donor of the active site. The active-site Schiff-base intermediate with substrate is lysine 173. 5 residues coordinate aceneuramate: serine 175, glycine 199, aspartate 201, glutamate 202, and serine 218.

It belongs to the DapA family. NanA subfamily. As to quaternary structure, homotetramer.

The protein resides in the cytoplasm. The enzyme catalyses aceneuramate = aldehydo-N-acetyl-D-mannosamine + pyruvate. It functions in the pathway amino-sugar metabolism; N-acetylneuraminate degradation. Catalyzes the cleavage of N-acetylneuraminic acid (sialic acid) to form pyruvate and N-acetylmannosamine via a Schiff base intermediate. It prevents sialic acids from being recycled and returning to the cell surface. Involved in the N-glycolylneuraminic acid (Neu5Gc) degradation pathway. This is N-acetylneuraminate lyase from Rattus norvegicus (Rat).